A 370-amino-acid polypeptide reads, in one-letter code: S-adenosylmethionine decarboxylase proenzyme (370 aa).

Phe28 is a substrate binding site. Active-site residues include Glu29 and Glu32. Residue Glu85 coordinates substrate. The active-site Schiff-base intermediate with substrate; via pyruvic acid is the Ser86. At Ser86 the chain carries Pyruvic acid (Ser); by autocatalysis. Cys100 (proton donor; for catalytic activity) is an active-site residue. Active-site proton acceptor; for processing activity residues include Ser249 and His262. Substrate is bound at residue Glu266.

The protein belongs to the eukaryotic AdoMetDC family. As to quaternary structure, forms a heterodimer with catalytically inactive AdoMetDC prozyme; heterodimerization is required to activate AdoMetDC. It depends on pyruvate as a cofactor. Post-translationally, is synthesized initially as an inactive proenzyme. Formation of the active enzyme involves a self-maturation process in which the active site pyruvoyl group is generated from an internal serine residue via an autocatalytic post-translational modification. Two non-identical subunits are generated from the proenzyme in this reaction, and the pyruvate is formed at the N-terminus of the alpha chain, which is derived from the carboxyl end of the proenzyme. The post-translation cleavage follows an unusual pathway, termed non-hydrolytic serinolysis, in which the side chain hydroxyl group of the serine supplies its oxygen atom to form the C-terminus of the beta chain, while the remainder of the serine residue undergoes an oxidative deamination to produce ammonia and the pyruvoyl group blocking the N-terminus of the alpha chain.

It carries out the reaction S-adenosyl-L-methionine + H(+) = S-adenosyl 3-(methylsulfanyl)propylamine + CO2. The protein operates within amine and polyamine biosynthesis; S-adenosylmethioninamine biosynthesis; S-adenosylmethioninamine from S-adenosyl-L-methionine: step 1/1. With respect to regulation, allosterically activated by AdoMetDC prozyme. Activated by putrescine and to a lesser extent by spermidine, norspermidine and spermine. Inhibited by 5'-([(Z)-4-amino-2-butenyl]methylamino)-5'-deoxyadenosine (MDL 73811). In terms of biological role, in association with the catalytically inactive AdoMetDC prozyme, catalyzes the decarboxylation of S-adenosyl-L-methionine which is essential for the biosynthesis of the polyamine spermidine. Required for growth and survival during the bloodstream life cycle stage. The sequence is that of S-adenosylmethionine decarboxylase proenzyme from Trypanosoma brucei brucei.